The sequence spans 283 residues: MKDSHQTIGVFVRPTHHQNPLFSELTQAKEWVLRLLEDEGFESFMADDNGLKDERLIEKAYAFLCLGGDGTILGALRMMHSYNKPCFGVRMGNLGYLTAIELNELKDFLQNLKHNKIKLEEHLALEGRIEEISFYAINEIVITRKEALGILDIEACVSHTPFNTYKGDGLIIATPLGSTAYNLSAHGPIVHALNQSYVLTPLCDFSLTQRPLVLGAEFCLSFCANKDALVIIDGQATYDLKANQKLYIQKSPTTTKLLQKNSRDYFKVLKEKLLWGESSSKKN.

Aspartate 69 acts as the Proton acceptor in catalysis. Residues 69–70 (DG), 138–139 (NE), lysine 166, aspartate 168, leucine 176, 179–184 (TAYNLS), and glutamine 235 each bind NAD(+).

This sequence belongs to the NAD kinase family. A divalent metal cation is required as a cofactor.

It is found in the cytoplasm. The catalysed reaction is NAD(+) + ATP = ADP + NADP(+) + H(+). Functionally, involved in the regulation of the intracellular balance of NAD and NADP, and is a key enzyme in the biosynthesis of NADP. Catalyzes specifically the phosphorylation on 2'-hydroxyl of the adenosine moiety of NAD to yield NADP. This Helicobacter acinonychis (strain Sheeba) protein is NAD kinase.